The chain runs to 412 residues: CCA-adding enzyme (412 aa).

ATP-binding residues include S41 and K44. Residues S41 and K44 each contribute to the CTP site. 3 residues coordinate Mg(2+): D53, D55, and D106. H129, K149, and Y158 together coordinate ATP. Residues H129, K149, and Y158 each contribute to the CTP site.

The protein belongs to the tRNA nucleotidyltransferase/poly(A) polymerase family. Archaeal CCA-adding enzyme subfamily. As to quaternary structure, homodimer. Requires Mg(2+) as cofactor.

It catalyses the reaction a tRNA precursor + 2 CTP + ATP = a tRNA with a 3' CCA end + 3 diphosphate. It carries out the reaction a tRNA with a 3' CCA end + 2 CTP + ATP = a tRNA with a 3' CCACCA end + 3 diphosphate. Its function is as follows. Catalyzes the addition and repair of the essential 3'-terminal CCA sequence in tRNAs without using a nucleic acid template. Adds these three nucleotides in the order of C, C, and A to the tRNA nucleotide-73, using CTP and ATP as substrates and producing inorganic pyrophosphate. tRNA 3'-terminal CCA addition is required both for tRNA processing and repair. Also involved in tRNA surveillance by mediating tandem CCA addition to generate a CCACCA at the 3' terminus of unstable tRNAs. While stable tRNAs receive only 3'-terminal CCA, unstable tRNAs are marked with CCACCA and rapidly degraded. The polypeptide is CCA-adding enzyme (Saccharolobus islandicus (strain Y.G.57.14 / Yellowstone #1) (Sulfolobus islandicus)).